A 147-amino-acid chain; its full sequence is Large ribosomal subunit protein uL13 (147 aa).

The protein belongs to the universal ribosomal protein uL13 family. As to quaternary structure, part of the 50S ribosomal subunit.

Its function is as follows. This protein is one of the early assembly proteins of the 50S ribosomal subunit, although it is not seen to bind rRNA by itself. It is important during the early stages of 50S assembly. The chain is Large ribosomal subunit protein uL13 from Corynebacterium diphtheriae (strain ATCC 700971 / NCTC 13129 / Biotype gravis).